Consider the following 234-residue polypeptide: Probable Ufm1-specific protease 1 (234 aa).

Residues Cys70, Asp194, and His196 contribute to the active site.

This sequence belongs to the peptidase C78 family.

Thiol protease which recognizes and hydrolyzes the peptide bond at the C-terminal Gly of UFM1, a ubiquitin-like modifier protein bound to a number of target proteins. This Drosophila melanogaster (Fruit fly) protein is Probable Ufm1-specific protease 1.